Reading from the N-terminus, the 236-residue chain is 2-C-methyl-D-erythritol 4-phosphate cytidylyltransferase (236 aa).

Belongs to the IspD/TarI cytidylyltransferase family. IspD subfamily. As to quaternary structure, homodimer.

The catalysed reaction is 2-C-methyl-D-erythritol 4-phosphate + CTP + H(+) = 4-CDP-2-C-methyl-D-erythritol + diphosphate. It functions in the pathway isoprenoid biosynthesis; isopentenyl diphosphate biosynthesis via DXP pathway; isopentenyl diphosphate from 1-deoxy-D-xylulose 5-phosphate: step 2/6. Its function is as follows. Catalyzes the formation of 4-diphosphocytidyl-2-C-methyl-D-erythritol from CTP and 2-C-methyl-D-erythritol 4-phosphate (MEP). The polypeptide is 2-C-methyl-D-erythritol 4-phosphate cytidylyltransferase (Salmonella typhimurium (strain LT2 / SGSC1412 / ATCC 700720)).